A 282-amino-acid chain; its full sequence is Ribosome biogenesis GTPase A (282 aa).

A CP-type G domain is found at 14 to 178 (RREVTEKLKL…LLDTPGILWP (165 aa)). GTP-binding positions include 58–61 (NKAD), 86–87 (NS), 130–135 (NVGKST), and Gly174.

It belongs to the TRAFAC class YlqF/YawG GTPase family. MTG1 subfamily. Interacts with ctc. Interacts with the immature 50S ribosome subunit. 2 molecules of rbgA bind to one 50S subunit.

The protein resides in the cytoplasm. Its function is as follows. Essential protein that is required for a late step of 50S ribosomal subunit assembly. Has GTPase activity that is stimulated by interaction with the immature 50S ribosome subunit. Binds to the 23S rRNA. Required for the association of ribosomal proteins rplP and rpmA with the large subunit. The chain is Ribosome biogenesis GTPase A from Bacillus pumilus (strain SAFR-032).